Reading from the N-terminus, the 125-residue chain is Large ribosomal subunit protein bL20 (125 aa).

It belongs to the bacterial ribosomal protein bL20 family.

Functionally, binds directly to 23S ribosomal RNA and is necessary for the in vitro assembly process of the 50S ribosomal subunit. It is not involved in the protein synthesizing functions of that subunit. The protein is Large ribosomal subunit protein bL20 of Methylobacterium nodulans (strain LMG 21967 / CNCM I-2342 / ORS 2060).